The sequence spans 71 residues: Brevinin-1SN2 (71 aa).

The first 22 residues, 1–22 (MFTMKKSLLLIFFLGTINLSLC), serve as a signal peptide directing secretion. The propeptide at 23 to 45 (EEERNADEDEKRDGDDESDVEVQ) is removed in mature form. Residues C65 and C71 are joined by a disulfide bond.

This sequence belongs to the frog skin active peptide (FSAP) family. Brevinin subfamily. As to expression, expressed by the skin glands.

It is found in the secreted. Its function is as follows. Antimicrobial peptide. Active against a variety of Gram-negative and Gram-positive bacterial strains. Active against fungus C.glabrata 090902 and C.albicans ATCC 10231. Shows hemolytic activity against human erythrocytes. The sequence is that of Brevinin-1SN2 from Sylvirana spinulosa (Fine-spined frog).